The chain runs to 545 residues: Glucose-6-phosphate isomerase (545 aa).

Glu351 serves as the catalytic Proton donor. Active-site residues include His382 and Lys510.

The protein belongs to the GPI family.

Its subcellular location is the cytoplasm. It carries out the reaction alpha-D-glucose 6-phosphate = beta-D-fructose 6-phosphate. The protein operates within carbohydrate biosynthesis; gluconeogenesis. Its pathway is carbohydrate degradation; glycolysis; D-glyceraldehyde 3-phosphate and glycerone phosphate from D-glucose: step 2/4. Its function is as follows. Catalyzes the reversible isomerization of glucose-6-phosphate to fructose-6-phosphate. The polypeptide is Glucose-6-phosphate isomerase (Shewanella sediminis (strain HAW-EB3)).